Reading from the N-terminus, the 177-residue chain is NADH-quinone oxidoreductase subunit B (177 aa).

Cysteine 56, cysteine 57, cysteine 121, and cysteine 151 together coordinate [4Fe-4S] cluster.

It belongs to the complex I 20 kDa subunit family. NDH-1 is composed of 14 different subunits. Subunits NuoB, C, D, E, F, and G constitute the peripheral sector of the complex. The cofactor is [4Fe-4S] cluster.

It localises to the cell inner membrane. It carries out the reaction a quinone + NADH + 5 H(+)(in) = a quinol + NAD(+) + 4 H(+)(out). Its function is as follows. NDH-1 shuttles electrons from NADH, via FMN and iron-sulfur (Fe-S) centers, to quinones in the respiratory chain. Couples the redox reaction to proton translocation (for every two electrons transferred, four hydrogen ions are translocated across the cytoplasmic membrane), and thus conserves the redox energy in a proton gradient. This is NADH-quinone oxidoreductase subunit B from Roseobacter denitrificans (strain ATCC 33942 / OCh 114) (Erythrobacter sp. (strain OCh 114)).